The primary structure comprises 232 residues: Triggering receptor expressed on myeloid cells 1 (232 aa).

Positions 1–20 are cleaved as a signal peptide; that stretch reads MRKAGVWGLLWMLFIEEIQA. Positions 21–125 constitute an Ig-like V-type domain; that stretch reads AAEVFEEKCT…DPIILFHPVR (105 aa). Over 21-203 the chain is Extracellular; that stretch reads AAEVFEEKCT…THVNRAPGIS (183 aa). Cysteines 41 and 109 form a disulfide. Residues 152 to 186 are disordered; that stretch reads PLPVTTKLRPRPRPRPKPVTQPIPTSADRLSSPGF. N-linked (GlcNAc...) asparagine glycosylation is present at asparagine 192. A helical membrane pass occupies residues 204–224; the sequence is IIIPAACGLLSKTLVFIGLFA. The Cytoplasmic segment spans residues 225-232; sequence VTHRSFAS.

Monomer. Homomultimer; when activated. Interacts with TYROBP/DAP12. Interacts with TLR4. Detected in bone marrow, tongue, lung, liver, thymus, spleen, jejunum, ileum and lymph nodes.

The protein localises to the cell membrane. In terms of biological role, cell surface receptor that plays important roles in innate and adaptive immunity by amplifying inflammatory responses. Upon activation by various ligands such as PGLYRP1, HMGB1 or HSP70, multimerizes and forms a complex with transmembrane adapter TYROBP/DAP12. In turn, initiates a SYK-mediated cascade of tyrosine phosphorylation, activating multiple downstream mediators such as BTK, MAPK1, MAPK3 or phospholipase C-gamma. This cascade promotes the neutrophil- and macrophage-mediated release of pro-inflammatory cytokines and/or chemokines, as well as their migration and thereby amplifies inflammatory responses that are triggered by bacterial and fungal infections. By also promoting the amplification of inflammatory signals that are initially triggered by Toll-like receptor (TLR) and NOD-like receptor engagement, plays a major role in the pathophysiology of acute and chronic inflammatory diseases of different etiologies including septic shock and atherosclerosis. The polypeptide is Triggering receptor expressed on myeloid cells 1 (TREM1) (Bos taurus (Bovine)).